A 287-amino-acid chain; its full sequence is Ribonuclease Z (287 aa).

Residues His-64, His-66, Asp-68, His-69, His-124, Asp-191, and His-250 each coordinate Zn(2+). Catalysis depends on Asp-68, which acts as the Proton acceptor.

It belongs to the RNase Z family. Homodimer. Zn(2+) serves as cofactor.

The catalysed reaction is Endonucleolytic cleavage of RNA, removing extra 3' nucleotides from tRNA precursor, generating 3' termini of tRNAs. A 3'-hydroxy group is left at the tRNA terminus and a 5'-phosphoryl group is left at the trailer molecule.. In terms of biological role, zinc phosphodiesterase, which displays some tRNA 3'-processing endonuclease activity. Probably involved in tRNA maturation, by removing a 3'-trailer from precursor tRNA. The sequence is that of Ribonuclease Z from Pyrobaculum calidifontis (strain DSM 21063 / JCM 11548 / VA1).